Here is a 599-residue protein sequence, read N- to C-terminus: Endoribonuclease ZC3H12A (599 aa).

Residues 1–40 (MSGPCGEKPVLEASPTMSLWEFEDSHSRQGTPRPGQELAA) are disordered. A ubiquitin association domain region spans residues 42–87 (EASALELQMKVDFFRKLGYSSTEIHSVLQKLGVQADTNTVLGELVK). Positions 81–150 (VLGELVKHGT…DGSNVAMSHG (70 aa)) are necessary for interaction with TANK. Residues 90 to 133 (TATERERQTSPDPCPQLPLVPRGGGTPKAPNLEPPLPEEEKEGS) form a disordered region. At S99 the chain carries Phosphoserine. The segment at 112–297 (GGGTPKAPNL…LDNFLRKKPL (186 aa)) is RNase. One can recognise an RNase NYN domain in the interval 135–290 (LRPVVIDGSN…LGRHGPSLDN (156 aa)). The RNA binding stretch occupies residues 214-220 (RRVGGKR). D226 is a binding site for Mg(2+). The segment at 301–324 (HRKQPCPYGRKCTYGIKCRFFHPE) adopts a C3H1-type zinc-finger fold. Positions 301–457 (HRKQPCPYGR…SELWGVRGGG (157 aa)) are necessary for interaction with ZC3H12D. The segment at 343–420 (LSPPRAPSKD…SGSSFGPTDW (78 aa)) is disordered. Phosphoserine is present on S344. Positions 358–375 (PSPSSQSSSLLTESEQCS) are enriched in low complexity. The span at 386–399 (SPGSRQEGLTQTYA) shows a compositional bias: polar residues. Phosphoserine is present on residues S438 and S442. The segment at 522–546 (PPPTSVLQEPPVQSPGAGRSPWGRA) is disordered.

The protein belongs to the ZC3H12 family. As to quaternary structure, oligomer. Found in a deubiquitination complex with TANK, USP10 and ZC3H12A; this complex inhibits genotoxic stress- or interleukin-1-beta-mediated NF-kappaB activation by promoting IKBKG or TRAF6 deubiquitination. Interacts with IKBKG; this interaction increases in response to DNA damage. Interacts with TANK; this interaction increases in response to DNA damage and serves as a bridge to anchor both TANK and USP10 into a deubiquitinating complex. Interacts with TRAF6; this interaction increases in response to DNA damage and is stimulated by TANK. Interacts with USP10; this interaction increases in response to DNA damage and serves as a bridge to anchor both TANK and USP10 into a deubiquitinating complex. Interacts with ZC3H12D. Interacts with TNRC6A. Interacts with IKBKB/IKKB. Interacts with IKBKB/IKKB. Interacts with BTRC; the interaction occurs when ZC3H12A is phosphorylated in a IKBKB/IKKB-dependent manner. Interacts with IRAK1; this interaction increases the interaction between ZC3H12A and IKBKB/IKKB. Interacts with UPF1; this interaction occurs in a mRNA translationally active- and termination-dependent manner and is essential for ZC3H12A-mediated degradation of target mRNAs. Associates with ribosomes. Interacts with ubiquitin. (Microbial infection) Oligomerization is necessary for antiviral activity. Mg(2+) is required as a cofactor. Phosphorylated by IRAK1; phosphorylation is necessary for subsequent phosphorylation by the I-kappa-B-kinase (IKK) complex. Phosphorylated by I-kappa-B-kinase (IKK) subunits IKBKB/IKKB and CHUK/IKKA at Ser-438 and Ser-442; these phosphorylations promote ubiquitin proteasome-mediated degradation of ZC3H12A and hence facilitates rapid and robust production of IL-6 mRNA in response to toll-like receptor (TLR) or IL-1 receptor stimuli. In terms of processing, (Microbial infection) Rapidly degraded in activated T-cells in response to phorbol 13-acetate 12-myristate (PMA) during HIV-1 viral infection. Post-translationally, ubiquitinated; ubiquitination is induced in response to interleukin IL1 receptor stimuli in a IKBKB/IKKB and IRAK1-dependent manner, leading to proteasome-mediated degradation. Proteolytically cleaved between Arg-111 and Arg-214 by MALT1 in activated T-cells; cleavage at Arg-111 is critical for promoting ZC3H12A degradation in response to T-cell receptor (TCR) stimulation, and hence is necessary for prolonging the stability of a set of mRNAs controlling T-cell activation and Th17 cell differentiation. As to expression, expressed in heart, placenta, spleen, kidney, liver and lung. Expressed in leukocytes. Expressed in monocyte.

It localises to the nucleus. It is found in the cytoplasm. Its subcellular location is the P-body. The protein localises to the rough endoplasmic reticulum membrane. The protein resides in the cytoplasmic granule. Its function is as follows. Endoribonuclease involved in various biological functions such as cellular inflammatory response and immune homeostasis, glial differentiation of neuroprogenitor cells, cell death of cardiomyocytes, adipogenesis and angiogenesis. Functions as an endoribonuclease involved in mRNA decay. Modulates the inflammatory response by promoting the degradation of a set of translationally active cytokine-induced inflammation-related mRNAs, such as IL6 and IL12B, during the early phase of inflammation. Prevents aberrant T-cell-mediated immune reaction by degradation of multiple mRNAs controlling T-cell activation, such as those encoding cytokines (IL6 and IL2), cell surface receptors (ICOS, TNFRSF4 and TNFR2) and transcription factor (REL). Inhibits cooperatively with ZC3H12A the differentiation of helper T cells Th17 in lungs. They repress target mRNA encoding the Th17 cell-promoting factors IL6, ICOS, REL, IRF4, NFKBID and NFKBIZ. The cooperation requires RNA-binding by RC3H1 and the nuclease activity of ZC3H12A. Together with RC3H1, destabilizes TNFRSF4/OX40 mRNA by binding to the conserved stem loop structure in its 3'UTR. Self regulates by destabilizing its own mRNA. Cleaves mRNA harboring a stem-loop (SL), often located in their 3'-UTRs, during the early phase of inflammation in a helicase UPF1-dependent manner. Plays a role in the inhibition of microRNAs (miRNAs) biogenesis. Cleaves the terminal loop of a set of precursor miRNAs (pre-miRNAs) important for the regulation of the inflammatory response leading to their degradation, and thus preventing the biosynthesis of mature miRNAs. Also plays a role in promoting angiogenesis in response to inflammatory cytokines by inhibiting the production of antiangiogenic microRNAs via its anti-dicer RNase activity. Affects the overall ubiquitination of cellular proteins. Positively regulates deubiquitinase activity promoting the cleavage at 'Lys-48'- and 'Lys-63'-linked polyubiquitin chains on TNF receptor-associated factors (TRAFs), preventing JNK and NF-kappa-B signaling pathway activation, and hence negatively regulating macrophage-mediated inflammatory response and immune homeostasis. Also induces deubiquitination of the transcription factor HIF1A, probably leading to its stabilization and nuclear import, thereby positively regulating the expression of proangiogenic HIF1A-targeted genes. Involved in a TANK-dependent negative feedback response to attenuate NF-kappaB activation through the deubiquitination of IKBKG or TRAF6 in response to interleukin-1-beta (IL1B) stimulation or upon DNA damage. Prevents stress granule (SGs) formation and promotes macrophage apoptosis under stress conditions, including arsenite-induced oxidative stress, heat shock and energy deprivation. Plays a role in the regulation of macrophage polarization; promotes IL4-induced polarization of macrophages M1 into anti-inflammatory M2 state. May also act as a transcription factor that regulates the expression of multiple genes involved in inflammatory response, angiogenesis, adipogenesis and apoptosis. Functions as a positive regulator of glial differentiation of neuroprogenitor cells through an amyloid precursor protein (APP)-dependent signaling pathway. Attenuates septic myocardial contractile dysfunction in response to lipopolysaccharide (LPS) by reducing I-kappa-B-kinase (IKK)-mediated NF-kappa-B activation, and hence myocardial pro-inflammatory cytokine production. Functionally, (Microbial infection) Binds to Japanese encephalitis virus (JEV) and Dengue virus (DEN) RNAs. In terms of biological role, (Microbial infection) Exhibits antiviral activity against HIV-1 in lymphocytes by decreasing the abundance of HIV-1 viral RNA species. This is Endoribonuclease ZC3H12A from Homo sapiens (Human).